A 367-amino-acid polypeptide reads, in one-letter code: Glutamate 5-kinase 2 (367 aa).

Residue Lys10 coordinates ATP. Ser50, Asp136, and Asn148 together coordinate substrate. ATP is bound by residues 168–169 (TD) and 210–216 (TGGMATK). Positions 275-353 (SGQIVIDAGA…KQIGELLDYD (79 aa)) constitute a PUA domain.

Belongs to the glutamate 5-kinase family.

The protein resides in the cytoplasm. The enzyme catalyses L-glutamate + ATP = L-glutamyl 5-phosphate + ADP. Its pathway is amino-acid biosynthesis; L-proline biosynthesis; L-glutamate 5-semialdehyde from L-glutamate: step 1/2. Catalyzes the transfer of a phosphate group to glutamate to form L-glutamate 5-phosphate. The chain is Glutamate 5-kinase 2 from Pseudoalteromonas translucida (strain TAC 125).